Consider the following 519-residue polypeptide: Histidine--tRNA ligase (519 aa).

Belongs to the class-II aminoacyl-tRNA synthetase family. Homodimer.

Its subcellular location is the cytoplasm. It catalyses the reaction tRNA(His) + L-histidine + ATP = L-histidyl-tRNA(His) + AMP + diphosphate + H(+). The polypeptide is Histidine--tRNA ligase (Rhodopseudomonas palustris (strain BisB18)).